We begin with the raw amino-acid sequence, 138 residues long: Small ribosomal subunit protein uS12 (138 aa).

Residue Asp-89 is modified to 3-methylthioaspartic acid. The disordered stretch occupies residues 101–138 (ALDTAGTQNRNQGRSKYGTKRPKKGAATAAKGPVKGKK). Positions 105-114 (AGTQNRNQGR) are enriched in polar residues. Over residues 125–138 (GAATAAKGPVKGKK) the composition is skewed to low complexity.

This sequence belongs to the universal ribosomal protein uS12 family. In terms of assembly, part of the 30S ribosomal subunit. Contacts proteins S8 and S17. May interact with IF1 in the 30S initiation complex.

Its function is as follows. With S4 and S5 plays an important role in translational accuracy. Interacts with and stabilizes bases of the 16S rRNA that are involved in tRNA selection in the A site and with the mRNA backbone. Located at the interface of the 30S and 50S subunits, it traverses the body of the 30S subunit contacting proteins on the other side and probably holding the rRNA structure together. The combined cluster of proteins S8, S12 and S17 appears to hold together the shoulder and platform of the 30S subunit. The polypeptide is Small ribosomal subunit protein uS12 (Heliobacterium modesticaldum (strain ATCC 51547 / Ice1)).